Here is a 515-residue protein sequence, read N- to C-terminus: Leucine-rich repeat transmembrane neuronal protein 2 (515 aa).

The first 33 residues, 1–33 (MGLHFKWPLGAPMLAAIYAMSVVLKMLPALGMA), serve as a signal peptide directing secretion. Residues 34–421 (CPPKCRCEKL…EPDNAIFTQR (388 aa)) lie on the Extracellular side of the membrane. Residue Asn-57 is glycosylated (N-linked (GlcNAc...) asparagine). LRR repeat units follow at residues 61-83 (KGSLGLSLRHNHITALERDQFAS), 84-107 (FSQLTWLHLDHNQISTVKEDAFQG), 109-131 (YKLKELILSSNKIFYLPNTTFTQ), 132-155 (LINLQNLDLSFNQLSSLHPELFYG), 156-179 (LRKLQTLHLRSNSLRTIPVRLFWD), 181-203 (RSLEFLDLSTNRLRSLARNGFAG), 205-227 (IKLRELHLEHNQLTKINFAHFLR), 229-251 (SSLHTLFLQWNKISNLTCGMEWT), 252-275 (WSTLEKLDLTGNEIKAIDLTVFET), and 276-299 (MPNLKILLMDNNKLNSLDSKILSS). A glycan (N-linked (GlcNAc...) asparagine) is linked at Asn-126. N-linked (GlcNAc...) asparagine glycosylation occurs at Asn-243. An N-linked (GlcNAc...) asparagine glycan is attached at Asn-362. The helical transmembrane segment at 422 to 442 (VITGTMALLFSFFFIIFIVFI) threads the bilayer. Residues 443 to 515 (SRKCCPPTLR…QQLPYKECEV (73 aa)) are Cytoplasmic-facing. The short motif at 512-515 (ECEV) is the Involved in DLG4-binding element.

Belongs to the LRRTM family. As to quaternary structure, interacts with DLG4. Interacts with neurexin NRXN1; interaction is mediated by heparan sulfate glycan modification on neurexin. As to expression, expressed in neuronal tissues. Widely distributed in neuropil regions in discrete puncta throughout the brain (at protein level). Detected in cortex, thalamus, striatum, olfactory bulb, cerebellum and all hippocampal subfields (at protein level). More abundant in deep than in superficial layers of neocortex (at protein level).

It is found in the cell membrane. The protein resides in the postsynaptic cell membrane. In terms of biological role, involved in the development and maintenance of excitatory synapses in the nervous system. Regulates surface expression of AMPA receptors and instructs the development of functional glutamate release sites. Acts as a ligand for the presynaptic receptors NRXN1-A and NRXN1-B. The chain is Leucine-rich repeat transmembrane neuronal protein 2 (Lrrtm2) from Rattus norvegicus (Rat).